Consider the following 89-residue polypeptide: Small ribosomal subunit protein uS15 (89 aa).

The protein belongs to the universal ribosomal protein uS15 family. As to quaternary structure, part of the 30S ribosomal subunit. Forms a bridge to the 50S subunit in the 70S ribosome, contacting the 23S rRNA.

In terms of biological role, one of the primary rRNA binding proteins, it binds directly to 16S rRNA where it helps nucleate assembly of the platform of the 30S subunit by binding and bridging several RNA helices of the 16S rRNA. Forms an intersubunit bridge (bridge B4) with the 23S rRNA of the 50S subunit in the ribosome. The sequence is that of Small ribosomal subunit protein uS15 from Desulfatibacillum aliphaticivorans.